Here is a 242-residue protein sequence, read N- to C-terminus: Immunity protein TsiV2 (242 aa).

3 helical membrane-spanning segments follow: residues 39 to 59, 66 to 86, and 118 to 138; these read VFGA…FADI, FWGF…LFMP, and FAWV…PLAF.

It is found in the host membrane. In terms of biological role, immunity protein that plays a role in preventing early activation of toxin VasX. The protein is Immunity protein TsiV2 of Vibrio cholerae serotype O1 (strain ATCC 39315 / El Tor Inaba N16961).